A 72-amino-acid chain; its full sequence is UPF0346 protein GK1571 (72 aa).

It belongs to the UPF0346 family.

This Geobacillus kaustophilus (strain HTA426) protein is UPF0346 protein GK1571.